The primary structure comprises 694 residues: Elongation factor G (694 aa).

The tr-type G domain occupies 8–287 (EDYRNFGIMA…AVVEFLPAPT (280 aa)). Residues 17–24 (AHIDAGKT), 86–90 (DTPGH), and 140–143 (NKMD) each bind GTP.

This sequence belongs to the TRAFAC class translation factor GTPase superfamily. Classic translation factor GTPase family. EF-G/EF-2 subfamily.

It is found in the cytoplasm. Its function is as follows. Catalyzes the GTP-dependent ribosomal translocation step during translation elongation. During this step, the ribosome changes from the pre-translocational (PRE) to the post-translocational (POST) state as the newly formed A-site-bound peptidyl-tRNA and P-site-bound deacylated tRNA move to the P and E sites, respectively. Catalyzes the coordinated movement of the two tRNA molecules, the mRNA and conformational changes in the ribosome. The protein is Elongation factor G of Brucella ovis (strain ATCC 25840 / 63/290 / NCTC 10512).